Reading from the N-terminus, the 184-residue chain is Protein DESIGUAL 3 (184 aa).

The N-terminal stretch at 1–24 is a signal peptide; it reads MESELGFLVSVVIICADITATVLG. Residues 34–45 are compositionally biased toward basic residues; it reads APHHHHQQHSRH. The interval 34-53 is disordered; sequence APHHHHQQHSRHSGSGCRRS. The next 3 helical transmembrane spans lie at 62 to 82, 99 to 119, and 140 to 160; these read GVAA…LGGC, ILAV…YSTL, and FFLI…AYYV. An N-linked (GlcNAc...) asparagine glycan is attached at Asn180.

Belongs to the DESIGUAL family. As to expression, mainly expressed in roots, inflorescences and developing leaves, and, at low levels, in mature leaves.

It localises to the endoplasmic reticulum membrane. Functionally, involved, partially redundantly with VCC/DEAL1 and DEAL2, to ensure bilateral symmetry development and early leaf margin patterning, probably via the regulation of auxin and CUC2 distribution. The polypeptide is Protein DESIGUAL 3 (Arabidopsis thaliana (Mouse-ear cress)).